The following is a 335-amino-acid chain: UPF0324 membrane protein LMOf2365_2179 (335 aa).

The next 8 helical transmembrane spans lie at 10–28 (TFWY…SYFL), 33–55 (FLMI…ALFP), 91–113 (AGWR…VYFL), 123–142 (LAIL…VVAI), 155–177 (VAAT…IYPI), 251–270 (VPWF…FGII), 277–299 (FLVI…NVHL), and 309–331 (PFAA…VLLF).

The protein belongs to the UPF0324 family.

The protein resides in the cell membrane. This Listeria monocytogenes serotype 4b (strain F2365) protein is UPF0324 membrane protein LMOf2365_2179.